The sequence spans 218 residues: uncharacterized protein (218 aa).

The signal sequence occupies residues 1–17; the sequence is MLKKIIILFLGIFLLSS. A lipid anchor (N-palmitoyl cysteine) is attached at Cys-18. Cys-18 is lipidated: S-diacylglycerol cysteine. Residues 136 to 164 adopt a coiled-coil conformation; sequence YKEKKIEEELNQIKAMLKETKRDITKYTC.

It localises to the cell membrane. This is an uncharacterized protein from Rickettsia typhi (strain ATCC VR-144 / Wilmington).